A 232-amino-acid chain; its full sequence is Ribose-5-phosphate isomerase A (232 aa).

Substrate contacts are provided by residues 29 to 32 (SGST), 86 to 89 (DGAD), and 99 to 102 (KGGG). The active-site Proton acceptor is E108. Position 126 (K126) interacts with substrate.

This sequence belongs to the ribose 5-phosphate isomerase family. Homodimer.

The catalysed reaction is aldehydo-D-ribose 5-phosphate = D-ribulose 5-phosphate. Its pathway is carbohydrate degradation; pentose phosphate pathway; D-ribose 5-phosphate from D-ribulose 5-phosphate (non-oxidative stage): step 1/1. Catalyzes the reversible conversion of ribose-5-phosphate to ribulose 5-phosphate. The protein is Ribose-5-phosphate isomerase A of Synechococcus sp. (strain ATCC 27144 / PCC 6301 / SAUG 1402/1) (Anacystis nidulans).